The following is a 195-amino-acid chain: Interferon tau-1 (195 aa).

A signal peptide spans 1-23 (MAFVLSLLMALVLVSYGPGGSLG). Cystine bridges form between C24–C122 and C52–C162.

It belongs to the alpha/beta interferon family. IFN-alphaII subfamily. As to expression, constitutively and exclusively expressed in the mononuclear cells of the extraembryonic trophectoderm.

It is found in the secreted. Its function is as follows. Paracrine hormone primarily responsible for maternal recognition of pregnancy. Interacts with endometrial receptors, probably type I interferon receptors, and blocks estrogen receptor expression, preventing the estrogen-induced increase in oxytocin receptor expression in the endometrium. This results in the suppression of the pulsatile endometrial release of the luteolytic hormone prostaglandin F2-alpha, hindering the regression of the corpus luteum (luteolysis) and therefore a return to ovarian cyclicity. This, and a possible direct effect of IFN-tau on prostaglandin synthesis, leads in turn to continued ovarian progesterone secretion, which stimulates the secretion by the endometrium of the nutrients required for the growth of the conceptus. In summary, displays particularly high antiviral and antiproliferative potency concurrently with particular weak cytotoxicity, high antiluteolytic activity and immunomodulatory properties. In contrast with other IFNs, IFN-tau is not virally inducible. This is Interferon tau-1 (IFNT1) from Ovis aries (Sheep).